The following is a 172-amino-acid chain: Large ribosomal subunit protein uL10 (172 aa).

The protein belongs to the universal ribosomal protein uL10 family. In terms of assembly, part of the ribosomal stalk of the 50S ribosomal subunit. The N-terminus interacts with L11 and the large rRNA to form the base of the stalk. The C-terminus forms an elongated spine to which L12 dimers bind in a sequential fashion forming a multimeric L10(L12)X complex.

Forms part of the ribosomal stalk, playing a central role in the interaction of the ribosome with GTP-bound translation factors. In Methylobacterium radiotolerans (strain ATCC 27329 / DSM 1819 / JCM 2831 / NBRC 15690 / NCIMB 10815 / 0-1), this protein is Large ribosomal subunit protein uL10.